We begin with the raw amino-acid sequence, 867 residues long: Heat shock 70 kDa protein 17 (867 aa).

An N-terminal signal peptide occupies residues 1–24; the sequence is MGKIFSWLVVLLSLISLVPVPSES. Composition is skewed to polar residues over residues 560-575 and 587-598; these read TIDS…ATDE and DAENSTASNTTA. 2 disordered regions span residues 560-607 and 829-867; these read TIDS…ASLG and PKPK…HDEL. Residues 833-867 show a composition bias toward basic and acidic residues; that stretch reads PKIEKVTKTENTTKEEEQSKSSDEAAKEEESHDEL. A Prevents secretion from ER motif is present at residues 865–867; the sequence is DEL.

The protein belongs to the heat shock protein 70 (TC 1.A.33) family. HSP110/SSE subfamily.

The protein resides in the endoplasmic reticulum lumen. The chain is Heat shock 70 kDa protein 17 (HSP70-17) from Arabidopsis thaliana (Mouse-ear cress).